The primary structure comprises 219 residues: Small ribosomal subunit protein uS3c (219 aa).

One can recognise a KH type-2 domain in the interval 47 to 119; it reads VRKYVRTAEN…KFIISLAEVE (73 aa).

It belongs to the universal ribosomal protein uS3 family. As to quaternary structure, part of the 30S ribosomal subunit.

The protein localises to the plastid. Its subcellular location is the chloroplast. In Staurastrum punctulatum (Green alga), this protein is Small ribosomal subunit protein uS3c (rps3).